The primary structure comprises 351 residues: UDP-3-O-acylglucosamine N-acyltransferase (351 aa).

The active-site Proton acceptor is the His240.

Belongs to the transferase hexapeptide repeat family. LpxD subfamily. As to quaternary structure, homotrimer.

It carries out the reaction a UDP-3-O-[(3R)-3-hydroxyacyl]-alpha-D-glucosamine + a (3R)-hydroxyacyl-[ACP] = a UDP-2-N,3-O-bis[(3R)-3-hydroxyacyl]-alpha-D-glucosamine + holo-[ACP] + H(+). Its pathway is bacterial outer membrane biogenesis; LPS lipid A biosynthesis. Catalyzes the N-acylation of UDP-3-O-acylglucosamine using 3-hydroxyacyl-ACP as the acyl donor. Is involved in the biosynthesis of lipid A, a phosphorylated glycolipid that anchors the lipopolysaccharide to the outer membrane of the cell. The chain is UDP-3-O-acylglucosamine N-acyltransferase from Pseudomonas fluorescens (strain SBW25).